Reading from the N-terminus, the 495-residue chain is YTH domain-containing protein ECT3 (495 aa).

A YTH domain is found at 261-398 (AKFYVIKSYS…EQGIKVIKIF (138 aa)). RNA contacts are provided by residues 267–269 (KSY), Asp-273, 283–284 (WS), Asn-316, Trp-340, Trp-345, and Trp-353.

As to expression, expressed in the shoot apex, at the sites of leaf formation, and in emerging leaves.

It is found in the cytoplasm. Functionally, specifically recognizes and binds N6-methyladenosine (m6A)-containing RNAs, and regulates mRNA stability. M6A is a modification present at internal sites of mRNAs and some non-coding RNAs and plays a role in mRNA stability and processing. Required for the correct timing of leaf formation and normal leaf morphology. Required for proper trichome branching and morphology. Functions redundantly with ECT2. This chain is YTH domain-containing protein ECT3, found in Arabidopsis thaliana (Mouse-ear cress).